The chain runs to 231 residues: 2-C-methyl-D-erythritol 4-phosphate cytidylyltransferase (231 aa).

This sequence belongs to the IspD/TarI cytidylyltransferase family. IspD subfamily.

The catalysed reaction is 2-C-methyl-D-erythritol 4-phosphate + CTP + H(+) = 4-CDP-2-C-methyl-D-erythritol + diphosphate. The protein operates within isoprenoid biosynthesis; isopentenyl diphosphate biosynthesis via DXP pathway; isopentenyl diphosphate from 1-deoxy-D-xylulose 5-phosphate: step 2/6. Functionally, catalyzes the formation of 4-diphosphocytidyl-2-C-methyl-D-erythritol from CTP and 2-C-methyl-D-erythritol 4-phosphate (MEP). The sequence is that of 2-C-methyl-D-erythritol 4-phosphate cytidylyltransferase from Dictyoglomus thermophilum (strain ATCC 35947 / DSM 3960 / H-6-12).